Here is a 355-residue protein sequence, read N- to C-terminus: Heat-inducible transcription repressor HrcA (355 aa).

The protein belongs to the HrcA family.

Negative regulator of class I heat shock genes (grpE-dnaK-dnaJ and groELS operons). Prevents heat-shock induction of these operons. The chain is Heat-inducible transcription repressor HrcA from Nitratidesulfovibrio vulgaris (strain DSM 19637 / Miyazaki F) (Desulfovibrio vulgaris).